Reading from the N-terminus, the 240-residue chain is uncharacterized protein (240 aa).

The first 18 residues, 1-18 (MTRYTYLFILQIISCSFA), serve as a signal peptide directing secretion. N127 is a glycosylation site (N-linked (GlcNAc...) asparagine). The helical transmembrane segment at 215 to 235 (GFISSSQLPQFVYLIVFTIIG) threads the bilayer.

The protein resides in the membrane. This is an uncharacterized protein from Caenorhabditis elegans.